Reading from the N-terminus, the 395-residue chain is Ribosomal RNA small subunit methyltransferase H (395 aa).

S-adenosyl-L-methionine contacts are provided by residues 101–103, Asp-120, Tyr-147, Asp-171, and Gln-178; that span reads GGH.

Belongs to the methyltransferase superfamily. RsmH family.

It is found in the cytoplasm. The enzyme catalyses cytidine(1402) in 16S rRNA + S-adenosyl-L-methionine = N(4)-methylcytidine(1402) in 16S rRNA + S-adenosyl-L-homocysteine + H(+). Its function is as follows. Specifically methylates the N4 position of cytidine in position 1402 (C1402) of 16S rRNA. The sequence is that of Ribosomal RNA small subunit methyltransferase H from Mycobacterium ulcerans (strain Agy99).